The following is a 780-amino-acid chain: Putative ABC transporter ATP-binding protein BL0043 (780 aa).

2 ABC transporter domains span residues 2–238 (LKDI…QSET) and 282–531 (IRVS…GPAH). 34-41 (GPNGSGKS) contacts ATP. The disordered stretch occupies residues 230–272 (AEAVSQSETEGSIGTEAAPSRPTNDSPRQREREDGSELPLLSD). ATP is bound at residue 316–323 (GVNGSGKS). Helical transmembrane passes span 551–573 (FTMF…LAVI), 586–608 (SIHP…VRTG), 623–645 (GVTI…AVFL), and 759–778 (IAAR…AAII).

Belongs to the ABC transporter superfamily.

It localises to the cell membrane. Probably part of an ABC transporter complex. Responsible for energy coupling to the transport system. This Bifidobacterium longum (strain NCC 2705) protein is Putative ABC transporter ATP-binding protein BL0043.